Here is a 414-residue protein sequence, read N- to C-terminus: Transcriptional repressor protein YY1 (414 aa).

The tract at residues 1–170 (MASGDTLYIA…GGGSSSSGGG (170 aa)) is interaction with the SMAD1/SMAD4 complex. The tract at residues 33–81 (VETIETTVVGEEEEEDDDDEDGGGGDHGGGGGHGHAGHHHHHHHHHHHP) is disordered. Acidic residues predominate over residues 42–55 (GEEEEEDDDDEDGG). Residues 57–66 (GDHGGGGGHG) are compositionally biased toward gly residues. Residues 67–81 (HAGHHHHHHHHHHHP) show a composition bias toward basic residues. The tract at residues 116 to 260 (DDSDGLRAED…YSEYMTGKKL (145 aa)) is gly-rich region involved in interaction with HCFC1. Residue Ser118 is modified to Phosphoserine; by CK2. The tract at residues 157-203 (GKSGGGGSSSSGGGRVKKGGGKKSGKKSYLSGGAGAAGGGGADPGNK) is disordered. A compositionally biased stretch (gly residues) spans 158 to 170 (KSGGGGSSSSGGG). Residues 171–182 (RVKKGGGKKSGK) show a composition bias toward basic residues. Glycyl lysine isopeptide (Lys-Gly) (interchain with G-Cter in SUMO2) cross-links involve residues Lys182 and Lys183. Position 187 is a phosphoserine (Ser187). Positions 188–199 (GGAGAAGGGGAD) are enriched in gly residues. Glycyl lysine isopeptide (Lys-Gly) (interchain with G-Cter in SUMO2) cross-links involve residues Lys208 and Lys230. At Ser247 the chain carries Phosphoserine. The involved in nuclear matrix association stretch occupies residues 257-341 (GKKLPPGGIP…KAFVESSKLK (85 aa)). Glycyl lysine isopeptide (Lys-Gly) (interchain with G-Cter in SUMO2) cross-links involve residues Lys286 and Lys288. Positions 295–414 (TIACPHKGCT…LTHAKAKNNQ (120 aa)) are binding to DNA. 3 C2H2-type zinc fingers span residues 296-320 (IACP…LHTH), 325-347 (HVCA…QLVH), and 353-377 (FQCT…VRIH). Zn(2+)-binding residues include Cys298, Cys303, His316, His320, Cys327, Cys330, His343, His347, Cys355, Cys360, His373, and His377. Positions 333-371 (AFVESSKLKRHQLVHTGEKPFQCTFEGCGKRFSLDFNLR) are involved in repression of activated transcription. An involved in masking transactivation domain region spans residues 371 to 397 (RTHVRIHTGDRPYVCPFDGCNKKFAQS). Thr378 is modified (phosphothreonine). The segment at 383 to 407 (YVCPFDGCNKKFAQSTNLKSHILTH) adopts a C2H2-type 4 zinc-finger fold. The Zn(2+) site is built by Cys385, Cys390, His403, and His407. Residues Lys409 and Lys411 each participate in a glycyl lysine isopeptide (Lys-Gly) (interchain with G-Cter in SUMO2) cross-link.

It belongs to the YY transcription factor family. As to quaternary structure, interacts with YAF2 through the region encompassing the first and second zinc fingers. Component of the chromatin remodeling INO80 complex; specifically part of a complex module associated with the DBINO domain of INO80. Interacts with EED and EZH2; the interactions are indicative for an association with the PRC2/EED-EZH2 complex. Interacts with SFMBT2. Found in a complex with SMAD1 and SMAD4. Found in a complex with YY1, SIN3A and HDAC1. Accessory component of the polycomb repressive deubiquitinase (PR-DUB) complex, at least composed of BAP1, one of ASXL1, ASXL2 or (probably) ASXL3 and one of MBD5 or MBD6; the PR-DUB core associates with a number of accessory proteins, including FOXK1, FOXK2, KDM1B, HCFC1, YY1 and OGT. Interacts (via Gly-rich region) with HCFC1; the interaction is direct. Interacts (via C-terminal zinc-finger domains) with BAP1 (via ULD domain); the interaction is direct and requires HCFC1. Post-translationally, phosphorylation at Ser-118 by CK2 prevents proteolytic cleavage by caspase-7 (CASP7) during apoptosis. Proteolytically cleaved by caspase-7 (CASP7) in response to apoptosis. Phosphorylation at Ser-118 protects against proteolytic cleavage. In terms of processing, transiently poly-ADP-ribosylated by PARP1 upon DNA damage, with the effect of decreasing affinity of YY1 to its cognate DNA binding sites. Post-translationally, ubiquitinated.

The protein localises to the nucleus matrix. Its function is as follows. Multifunctional transcription factor that exhibits positive and negative control on a large number of cellular and viral genes by binding to sites overlapping the transcription start site. Binds to the consensus sequence 5'-CCGCCATNTT-3'; some genes have been shown to contain a longer binding motif allowing enhanced binding; the initial CG dinucleotide can be methylated greatly reducing the binding affinity. The effect on transcription regulation is depending upon the context in which it binds and diverse mechanisms of action include direct activation or repression, indirect activation or repression via cofactor recruitment, or activation or repression by disruption of binding sites or conformational DNA changes. Its activity is regulated by transcription factors and cytoplasmic proteins that have been shown to abrogate or completely inhibit YY1-mediated activation or repression. For example, it acts as a repressor in absence of adenovirus E1A protein but as an activator in its presence. Acts synergistically with the SMAD1 and SMAD4 in bone morphogenetic protein (BMP)-mediated cardiac-specific gene expression. Binds to SMAD binding elements (SBEs) (5'-GTCT/AGAC-3') within BMP response element (BMPRE) of cardiac activating regions. May play an important role in development and differentiation. Proposed to recruit the PRC2/EED-EZH2 complex to target genes that are transcriptional repressed. Involved in DNA repair. In vitro, binds to DNA recombination intermediate structures (Holliday junctions). Plays a role in regulating enhancer activation. Recruits the PR-DUB complex to specific gene-regulatory regions. In terms of biological role, proposed core component of the chromatin remodeling INO80 complex which is involved in transcriptional regulation, DNA replication and probably DNA repair; proposed to target the INO80 complex to YY1-responsive elements. This Homo sapiens (Human) protein is Transcriptional repressor protein YY1 (YY1).